The sequence spans 130 residues: DUF35 domain-containing scaffold protein (130 aa).

4 residues coordinate Zn(2+): Cys-20, Cys-23, Cys-34, and Cys-37.

It belongs to the scaffold protein DUF35 family. As to quaternary structure, interacts with acetoacetyl-CoA thiolase and HMG-CoA synthase (HMGCS) that catalyzes the first and second step in the mevalonate pathway, respectively.

Its function is as follows. Functions as a scaffold to connect the acetoacetyl-CoA thiolase and HMG-CoA synthase (HMGCS) dimers in the channeling thiolase/HMGCS complex, which allows for efficient coupling of the endergonic thiolase reaction with the exergonic HMGCS reaction. The polypeptide is DUF35 domain-containing scaffold protein (Methanothermococcus thermolithotrophicus (Methanococcus thermolithotrophicus)).